A 512-amino-acid polypeptide reads, in one-letter code: mRNA export factor (512 aa).

Low complexity predominate over residues 1 to 15 (MATDIDMLIDLGLDL). The segment at 1-243 (MATDIDMLID…APERKAPAAD (243 aa)) is disordered. Residues 5–17 (IDMLIDLGLDLSD) carry the Nuclear export signal motif. Residues Ser-16 and Ser-18 each carry the phosphoserine; by host modification. Composition is skewed to acidic residues over residues 16 to 26 (SDSDLDEDPPE) and 35 to 51 (LESD…EDME). The interval 104 to 112 (VWSRLGARR) is interaction with host ALYREF. A Nuclear localization signal motif is present at residues 110 to 138 (ARRPSCSPEQHGGKVARLQPPPTKAQPAR). The residue at position 114 (Ser-114) is a Phosphoserine; by host. Arg-138 carries the dimethylated arginine; by host modification. An RGG-box region spans residues 138 to 152 (RGGRRGRRRGRGRGG). Residues 139-149 (GGRRGRRRGRG) are compositionally biased toward basic residues. Arg-148 bears the Omega-N-methylarginine; by host mark. Position 150 is a dimethylated arginine; by host (Arg-150). Residues 214–233 (APPPLMTLAIAPPPADPRAP) show a composition bias toward pro residues. 4 residues coordinate Zn(2+): Cys-400, His-479, Cys-483, and Cys-488. A CHC2-type zinc finger spans residues 400–488 (CYLKARGLCG…HRQECSSRVC (89 aa)). The segment at 500-512 (YVHGKYFYCNSLF) is important for homodimerization.

The protein belongs to the HHV-1 ICP27 protein family. Homodimer. Interacts with host RBP1; this interaction facilitates the RNA polymerase recruitment to viral transcription sites. Interacts (via the RGG box) with host ALYREF/THOC4; this interaction recruits ALYREF to viral replication compartments and probably directs viral mRNA to the TAP/NFX1 pathway. Interacts with host ALYREF2. Interacts (via the RGG box) with host SRPK1; this interaction relocalizes SRPK1 to the nucleus and seems to alter its activity. Interacts with ICP4; this interaction modulates ICP4 DNA-binding activity. Interacts with host NXF1; this interaction allows efficient export of HHV-1 early and late transcripts. In terms of processing, methylated within the RGG box possibly by host PRMT1. When hypomethylated, ICP27 is exported to the cytoplasm earlier and more rapidly. Post-translationally, phosphorylated.

Its subcellular location is the host cytoplasm. It localises to the host nucleus. Its function is as follows. Multifunctional regulator of the expression of viral genes that contributes to the shutoff of host protein synthesis and mediates nuclear export of viral intronless mRNAs. Early in infection, this immediate early (EI) protein mediates the inhibition of cellular splicing. This results in the accumulation of unprocessed 3'end pre-mRNAs which can't be exported from the nucleus. Cellular protein synthesis is thereby shut off early after virus infection. Later in the infection, it helps recruit cellular RNA polymerase II to viral replication sites and promotes the nuclear export of viral intronless mRNAs by interacting with mRNAs and host NXF1/TAP. ICP27 binds to NUP62 which may provide facilitated viral mRNA export and may indirectly compete with some host cell transport receptors for binding and inhibit cellular nucleocytoplasmic transport pathways. Also stimulates translation of viral transcripts. Repression of host gene expression blocks the cell cycle at the G1 phase and prevents apoptosis. Seems to silence the 3' splice site of the promyelocytic leukemia (PML) intron 7a, thereby switching PML isoforms from PML-II to PML-V. This could be linked to the accelerated mRNA export induced by ICP27 which might not provide sufficient time for PML pre-mRNA to be spliced in the nucleus. The protein is mRNA export factor of Homo sapiens (Human).